Reading from the N-terminus, the 86-residue chain is Putative pro-MCH-like protein 2 (86 aa).

The tract at residues Gly-31–Glu-49 is NGE-like. Residues Gly-40–Ala-60 form a disordered region. The tract at residues Glu-52–Ile-64 is NEI-like. A melanin-concentrating hormone-like region spans residues Asp-68–Val-86.

This sequence belongs to the melanin-concentrating hormone family. Expressed in testis but not in brain.

The polypeptide is Putative pro-MCH-like protein 2 (PMCHL2) (Homo sapiens (Human)).